Consider the following 761-residue polypeptide: Neurotrypsin (761 aa).

Positions 1 to 21 (MALARCVLAVILGALSVVARA) are cleaved as a signal peptide. Residues 25–87 (SRSPLHRPHP…PPTIPRRCGA (63 aa)) are disordered. The segment covering 38 to 48 (RSQHAHYLPSS) has biased composition (low complexity). The Kringle domain maps to 85–157 (CGAGESWGNA…GKVDWGYCDC (73 aa)). Disulfide bonds link cysteine 85/cysteine 157, cysteine 101/cysteine 141, cysteine 130/cysteine 155, cysteine 191/cysteine 255, cysteine 204/cysteine 265, cysteine 235/cysteine 245, cysteine 298/cysteine 361, cysteine 311/cysteine 371, cysteine 341/cysteine 351, cysteine 411/cysteine 475, cysteine 424/cysteine 485, cysteine 455/cysteine 465, cysteine 505/cysteine 636, cysteine 547/cysteine 563, cysteine 651/cysteine 717, cysteine 680/cysteine 694, and cysteine 707/cysteine 736. N-linked (GlcNAc...) asparagine glycosylation is present at asparagine 93. SRCR domains follow at residues 166–267 (IRLV…SCVP), 273–373 (IRLA…TCYP), and 386–487 (IRLV…ICDY). The tract at residues 505-516 (CGLRLLHRRQKR) is zymogen activation region. The Peptidase S1 domain maps to 517–760 (IIGGNNSLRG…FVPWIKSVTS (244 aa)). Residue asparagine 521 is glycosylated (N-linked (GlcNAc...) asparagine). The active-site Charge relay system is histidine 562. N-linked (GlcNAc...) asparagine glycosylation occurs at asparagine 569. The active-site Charge relay system is aspartate 612. Serine 711 (charge relay system) is an active-site residue.

It belongs to the peptidase S1 family. As to expression, most abundant in cerebral cortex, hippocampus and amygdala.

Its subcellular location is the secreted. Plays a role in neuronal plasticity and the proteolytic action may subserve structural reorganizations associated with learning and memory operations. The chain is Neurotrypsin (Prss12) from Mus musculus (Mouse).